The sequence spans 207 residues: LexA repressor (207 aa).

Residues 28 to 48 constitute a DNA-binding region (H-T-H motif); it reads RAEIARHLGFKSANAAEEHLK. Active-site for autocatalytic cleavage activity residues include S124 and K161.

The protein belongs to the peptidase S24 family. Homodimer.

The enzyme catalyses Hydrolysis of Ala-|-Gly bond in repressor LexA.. Its function is as follows. Represses a number of genes involved in the response to DNA damage (SOS response), including recA and lexA. In the presence of single-stranded DNA, RecA interacts with LexA causing an autocatalytic cleavage which disrupts the DNA-binding part of LexA, leading to derepression of the SOS regulon and eventually DNA repair. This Pseudoalteromonas atlantica (strain T6c / ATCC BAA-1087) protein is LexA repressor.